Here is a 408-residue protein sequence, read N- to C-terminus: Acetate kinase (408 aa).

Residue asparagine 7 participates in Mg(2+) binding. Lysine 14 lines the ATP pocket. Arginine 91 lines the substrate pocket. Aspartate 148 functions as the Proton donor/acceptor in the catalytic mechanism. ATP is bound by residues 208-212, 283-285, and 331-335; these read HLGNG, DFR, and GIGEN. Residue glutamate 384 coordinates Mg(2+).

It belongs to the acetokinase family. In terms of assembly, homodimer. The cofactor is Mg(2+). Mn(2+) is required as a cofactor.

It localises to the cytoplasm. It catalyses the reaction acetate + ATP = acetyl phosphate + ADP. It functions in the pathway metabolic intermediate biosynthesis; acetyl-CoA biosynthesis; acetyl-CoA from acetate: step 1/2. Inhibited by diethylpyrocarbonate, hydroxylamine and phenylglyoxal. Catalyzes the formation of acetyl phosphate from acetate and ATP. Can also catalyze the reverse reaction. Can also phosphorylate propionate, but has very low activity toward butyrate. This Methanosarcina thermophila protein is Acetate kinase.